A 397-amino-acid polypeptide reads, in one-letter code: Homeobox protein knotted-1-like 2 (397 aa).

Disordered stretches follow at residues 43–68, 172–191, and 233–276; these read TFHLQSSGGGGGGGSGDQCNFQSPGT, FEARQRSSGTSRETSKDPEL, and NNNA…PRAE. Positions 49–58 are enriched in gly residues; that stretch reads SGGGGGGGSG. One can recognise an ELK domain in the interval 279-299; that stretch reads ELKNHLLRKYSGYLSSLKQEL. The segment at residues 300-363 is a DNA-binding region (homeobox; TALE-type); sequence SKKKKKGKLP…NQRKRHWKPS (64 aa).

This sequence belongs to the TALE/KNOX homeobox family. In terms of tissue distribution, expressed only in the stems.

Its subcellular location is the nucleus. Its function is as follows. Probably binds to the DNA sequence 5'-TGAC-3'. This chain is Homeobox protein knotted-1-like 2, found in Malus domestica (Apple).